A 134-amino-acid chain; its full sequence is Z-ring associated protein G (134 aa).

Residues 7-27 (EIWVAIGIAFIVGLFIGYIIV) form a helical membrane-spanning segment. The segment at 107 to 134 (ATDKSQNEQPRDYSEGASGLFKENKEEN) is disordered. Residues 111 to 120 (SQNEQPRDYS) show a composition bias toward basic and acidic residues.

Belongs to the ZapG family.

The protein localises to the cell inner membrane. In terms of biological role, involved in cell division, cell envelope biogenesis and cell shape maintenance. The sequence is that of Z-ring associated protein G from Haemophilus influenzae (strain ATCC 51907 / DSM 11121 / KW20 / Rd).